A 376-amino-acid polypeptide reads, in one-letter code: Chaperone protein DnaJ (376 aa).

One can recognise a J domain in the interval 5–69 (DYYEVLGISK…QKRAQYDQYG (65 aa)). The segment at 133 to 215 (GKDAEIEIPR…CHGKGRVTKT (83 aa)) adopts a CR-type zinc-finger fold. Zn(2+) contacts are provided by cysteine 146, cysteine 149, cysteine 163, cysteine 166, cysteine 189, cysteine 192, cysteine 203, and cysteine 206. CXXCXGXG motif repeat units follow at residues 146–153 (CDTCHGSG), 163–170 (CSHCGGKG), 189–196 (CQYCNGTG), and 203–210 (CSTCHGKG).

Belongs to the DnaJ family. As to quaternary structure, homodimer. Zn(2+) is required as a cofactor.

The protein localises to the cytoplasm. In terms of biological role, participates actively in the response to hyperosmotic and heat shock by preventing the aggregation of stress-denatured proteins and by disaggregating proteins, also in an autonomous, DnaK-independent fashion. Unfolded proteins bind initially to DnaJ; upon interaction with the DnaJ-bound protein, DnaK hydrolyzes its bound ATP, resulting in the formation of a stable complex. GrpE releases ADP from DnaK; ATP binding to DnaK triggers the release of the substrate protein, thus completing the reaction cycle. Several rounds of ATP-dependent interactions between DnaJ, DnaK and GrpE are required for fully efficient folding. Also involved, together with DnaK and GrpE, in the DNA replication of plasmids through activation of initiation proteins. This is Chaperone protein DnaJ from Listeria welshimeri serovar 6b (strain ATCC 35897 / DSM 20650 / CCUG 15529 / CIP 8149 / NCTC 11857 / SLCC 5334 / V8).